The following is a 389-amino-acid chain: Putative cyclin-F3-1 (389 aa).

The disordered stretch occupies residues 1 to 103 (MEAAAAAAAE…GAAGGSRQPV (103 aa)). The segment covering 19-43 (VEGAAVAAVAPEAAAEGPSEPNAGE) has biased composition (low complexity).

It belongs to the cyclin family. Cyclin F subfamily.

The polypeptide is Putative cyclin-F3-1 (CYCF3-1) (Oryza sativa subsp. japonica (Rice)).